We begin with the raw amino-acid sequence, 226 residues long: MLTWLTRDSLTFPPLEKALQDPNGLLAAGGDLSPERLVQAYRHGCFPWYQDGQPILWWSPDPRTVLFPNELHVSRSLAKLLRQGRYQVSFDTDFPAVIDACAAPRDYADGTWITDTMRNAYCELHRRGIAHSVEVRHNGELVGGLYGLAMGRLFFGESMFSRADNASKVGFVTLVKHLQEAGFVLIDCQMPTDHLHSLGARAISRASFADYLAHHLDQPNSASWRS.

Belongs to the L/F-transferase family.

The protein localises to the cytoplasm. It carries out the reaction N-terminal L-lysyl-[protein] + L-leucyl-tRNA(Leu) = N-terminal L-leucyl-L-lysyl-[protein] + tRNA(Leu) + H(+). The catalysed reaction is N-terminal L-arginyl-[protein] + L-leucyl-tRNA(Leu) = N-terminal L-leucyl-L-arginyl-[protein] + tRNA(Leu) + H(+). The enzyme catalyses L-phenylalanyl-tRNA(Phe) + an N-terminal L-alpha-aminoacyl-[protein] = an N-terminal L-phenylalanyl-L-alpha-aminoacyl-[protein] + tRNA(Phe). Functionally, functions in the N-end rule pathway of protein degradation where it conjugates Leu, Phe and, less efficiently, Met from aminoacyl-tRNAs to the N-termini of proteins containing an N-terminal arginine or lysine. This chain is Leucyl/phenylalanyl-tRNA--protein transferase, found in Pseudomonas putida (strain W619).